Consider the following 255-residue polypeptide: Pimeloyl-[acyl-carrier protein] methyl ester esterase (255 aa).

The 227-residue stretch at 16–242 (LVLLHGWGLN…AAHAPFISHP (227 aa)) folds into the AB hydrolase-1 domain. Residues W22, 82–83 (SL), and 143–147 (FLALQ) each bind substrate. S82 functions as the Nucleophile in the catalytic mechanism. Active-site residues include D207 and H235. A substrate-binding site is contributed by H235.

It belongs to the AB hydrolase superfamily. Carboxylesterase BioH family. Monomer.

It is found in the cytoplasm. The enzyme catalyses 6-carboxyhexanoyl-[ACP] methyl ester + H2O = 6-carboxyhexanoyl-[ACP] + methanol + H(+). It functions in the pathway cofactor biosynthesis; biotin biosynthesis. In terms of biological role, the physiological role of BioH is to remove the methyl group introduced by BioC when the pimeloyl moiety is complete. It allows to synthesize pimeloyl-ACP via the fatty acid synthetic pathway through the hydrolysis of the ester bonds of pimeloyl-ACP esters. The polypeptide is Pimeloyl-[acyl-carrier protein] methyl ester esterase (Pectobacterium atrosepticum (strain SCRI 1043 / ATCC BAA-672) (Erwinia carotovora subsp. atroseptica)).